The chain runs to 82 residues: P2Y purinoceptor 2 (82 aa).

A helical membrane pass occupies residues 1-25 (LPLSYGVVCVLGLCLNVVALYIFLC). Residues 26 to 35 (RLKTWNASTT) are Cytoplasmic-facing. A helical transmembrane segment spans residues 36–56 (YMFHLAVSDSLYAASLPLLVY). Residues 57–75 (YYAQGDHWPFSTVLCKLVR) are Extracellular-facing. A helical transmembrane segment spans residues 76–82 (FLFYTNL).

The protein belongs to the G-protein coupled receptor 1 family. In terms of tissue distribution, expressed in brain, heart, stria vascularis and vestibular labyrinth.

It is found in the cell membrane. Functionally, receptor for ATP and UTP coupled to G-proteins that activate a phosphatidylinositol-calcium second messenger system. Not activated by UDP. The sequence is that of P2Y purinoceptor 2 (P2RY2) from Meriones unguiculatus (Mongolian jird).